The following is a 235-amino-acid chain: MINTLPAFWAVIPAAGVGARMAADRPKQYLELAGQTLLEHSLDCFLGHPALAGVVVSIADDDPYWPGLRYASDPRIQRAAGGRERADSVLNALLVLHAQGASDSDWVLVHDAARPNLARSDLDKLLSELADDPVGGLLAVPARDTLKRADGNGRVSATVDRSTIWQAYTPQMFRLGALHRALAECLVSDVVVTDEASAIEWSGQAPRLVEGRSDNIKVTRPEDLEWLRQRWAGRR.

The protein belongs to the IspD/TarI cytidylyltransferase family. IspD subfamily.

It catalyses the reaction 2-C-methyl-D-erythritol 4-phosphate + CTP + H(+) = 4-CDP-2-C-methyl-D-erythritol + diphosphate. Its pathway is isoprenoid biosynthesis; isopentenyl diphosphate biosynthesis via DXP pathway; isopentenyl diphosphate from 1-deoxy-D-xylulose 5-phosphate: step 2/6. Functionally, catalyzes the formation of 4-diphosphocytidyl-2-C-methyl-D-erythritol from CTP and 2-C-methyl-D-erythritol 4-phosphate (MEP). The sequence is that of 2-C-methyl-D-erythritol 4-phosphate cytidylyltransferase from Pseudomonas putida (strain GB-1).